Consider the following 669-residue polypeptide: DNA ligase (669 aa).

NAD(+)-binding positions include 34 to 38, 83 to 84, and Glu-114; these read DAEYD and SL. Lys-116 functions as the N6-AMP-lysine intermediate in the catalytic mechanism. Residues Arg-137, Glu-171, Lys-287, and Lys-311 each coordinate NAD(+). Positions 405, 408, 423, and 428 each coordinate Zn(2+). Positions 591 to 669 constitute a BRCT domain; sequence NVESYFAGKT…EERFLQELNK (79 aa).

This sequence belongs to the NAD-dependent DNA ligase family. LigA subfamily. The cofactor is Mg(2+). It depends on Mn(2+) as a cofactor.

The catalysed reaction is NAD(+) + (deoxyribonucleotide)n-3'-hydroxyl + 5'-phospho-(deoxyribonucleotide)m = (deoxyribonucleotide)n+m + AMP + beta-nicotinamide D-nucleotide.. Its function is as follows. DNA ligase that catalyzes the formation of phosphodiester linkages between 5'-phosphoryl and 3'-hydroxyl groups in double-stranded DNA using NAD as a coenzyme and as the energy source for the reaction. It is essential for DNA replication and repair of damaged DNA. This is DNA ligase from Bacillus cereus (strain ATCC 14579 / DSM 31 / CCUG 7414 / JCM 2152 / NBRC 15305 / NCIMB 9373 / NCTC 2599 / NRRL B-3711).